Here is a 357-residue protein sequence, read N- to C-terminus: Tetraacyldisaccharide 4'-kinase (357 aa).

54-61 provides a ligand contact to ATP; sequence TVGGAGKT.

It belongs to the LpxK family.

It carries out the reaction a lipid A disaccharide + ATP = a lipid IVA + ADP + H(+). It participates in glycolipid biosynthesis; lipid IV(A) biosynthesis; lipid IV(A) from (3R)-3-hydroxytetradecanoyl-[acyl-carrier-protein] and UDP-N-acetyl-alpha-D-glucosamine: step 6/6. Its function is as follows. Transfers the gamma-phosphate of ATP to the 4'-position of a tetraacyldisaccharide 1-phosphate intermediate (termed DS-1-P) to form tetraacyldisaccharide 1,4'-bis-phosphate (lipid IVA). This chain is Tetraacyldisaccharide 4'-kinase, found in Rhizobium leguminosarum bv. trifolii (strain WSM2304).